A 77-amino-acid chain; its full sequence is Translation initiation factor IF-1, chloroplastic (77 aa).

In terms of domain architecture, S1-like spans 1–71; the sequence is MKEQKLIHEG…TRGRIIYRLR (71 aa).

It belongs to the IF-1 family. As to quaternary structure, component of the 30S ribosomal translation pre-initiation complex which assembles on the 30S ribosome in the order IF-2 and IF-3, IF-1 and N-formylmethionyl-tRNA(fMet); mRNA recruitment can occur at any time during PIC assembly.

The protein resides in the plastid. Its subcellular location is the chloroplast. Its function is as follows. One of the essential components for the initiation of protein synthesis. Stabilizes the binding of IF-2 and IF-3 on the 30S subunit to which N-formylmethionyl-tRNA(fMet) subsequently binds. Helps modulate mRNA selection, yielding the 30S pre-initiation complex (PIC). Upon addition of the 50S ribosomal subunit IF-1, IF-2 and IF-3 are released leaving the mature 70S translation initiation complex. This is Translation initiation factor IF-1, chloroplastic from Cabomba caroliniana (Carolina fanwort).